Reading from the N-terminus, the 519-residue chain is Protein nucleotidyltransferase YdiU (519 aa).

Glycine 100, glycine 102, arginine 103, lysine 123, aspartate 135, glycine 136, arginine 193, and arginine 200 together coordinate ATP. Catalysis depends on aspartate 270, which acts as the Proton acceptor. 2 residues coordinate Mg(2+): asparagine 271 and aspartate 280. Aspartate 280 contributes to the ATP binding site.

The protein belongs to the SELO family. Requires Mg(2+) as cofactor. Mn(2+) serves as cofactor.

The catalysed reaction is L-seryl-[protein] + ATP = 3-O-(5'-adenylyl)-L-seryl-[protein] + diphosphate. It carries out the reaction L-threonyl-[protein] + ATP = 3-O-(5'-adenylyl)-L-threonyl-[protein] + diphosphate. The enzyme catalyses L-tyrosyl-[protein] + ATP = O-(5'-adenylyl)-L-tyrosyl-[protein] + diphosphate. It catalyses the reaction L-histidyl-[protein] + UTP = N(tele)-(5'-uridylyl)-L-histidyl-[protein] + diphosphate. The catalysed reaction is L-seryl-[protein] + UTP = O-(5'-uridylyl)-L-seryl-[protein] + diphosphate. It carries out the reaction L-tyrosyl-[protein] + UTP = O-(5'-uridylyl)-L-tyrosyl-[protein] + diphosphate. Functionally, nucleotidyltransferase involved in the post-translational modification of proteins. It can catalyze the addition of adenosine monophosphate (AMP) or uridine monophosphate (UMP) to a protein, resulting in modifications known as AMPylation and UMPylation. This Xylella fastidiosa (strain Temecula1 / ATCC 700964) protein is Protein nucleotidyltransferase YdiU.